The chain runs to 450 residues: Signal recognition particle 54 kDa protein (450 aa).

Residues 107-114, 188-192, and 247-250 contribute to the GTP site; these read GIQGSGKT, DTAGR, and TKLD.

It belongs to the GTP-binding SRP family. SRP54 subfamily. In terms of assembly, part of the signal recognition particle protein translocation system, which is composed of SRP and FtsY. Archaeal SRP consists of a 7S RNA molecule of 300 nucleotides and two protein subunits: SRP54 and SRP19.

The protein localises to the cytoplasm. It carries out the reaction GTP + H2O = GDP + phosphate + H(+). Functionally, involved in targeting and insertion of nascent membrane proteins into the cytoplasmic membrane. Binds to the hydrophobic signal sequence of the ribosome-nascent chain (RNC) as it emerges from the ribosomes. The SRP-RNC complex is then targeted to the cytoplasmic membrane where it interacts with the SRP receptor FtsY. The sequence is that of Signal recognition particle 54 kDa protein from Methanococcus maripaludis (strain C6 / ATCC BAA-1332).